The primary structure comprises 219 residues: tRNA (guanine-N(7)-)-methyltransferase (219 aa).

Residues Glu-51, Glu-76, Asp-103, and Asp-125 each contribute to the S-adenosyl-L-methionine site. Asp-125 is a catalytic residue. Substrate is bound by residues Lys-129, Asp-161, and 199–202; that span reads TRYE.

Belongs to the class I-like SAM-binding methyltransferase superfamily. TrmB family.

The enzyme catalyses guanosine(46) in tRNA + S-adenosyl-L-methionine = N(7)-methylguanosine(46) in tRNA + S-adenosyl-L-homocysteine. The protein operates within tRNA modification; N(7)-methylguanine-tRNA biosynthesis. In terms of biological role, catalyzes the formation of N(7)-methylguanine at position 46 (m7G46) in tRNA. The protein is tRNA (guanine-N(7)-)-methyltransferase of Hyphomonas neptunium (strain ATCC 15444).